Reading from the N-terminus, the 620-residue chain is Endoglucanase 6 (620 aa).

Positions 1 to 22 (MEKFAPVAALLLLLLCFPVAFS) are cleaved as a signal peptide. Catalysis depends on D78, which acts as the Nucleophile. Catalysis depends on residues H411, D463, and E472. N554 and N564 each carry an N-linked (GlcNAc...) asparagine glycan.

This sequence belongs to the glycosyl hydrolase 9 (cellulase E) family.

It is found in the secreted. The enzyme catalyses Endohydrolysis of (1-&gt;4)-beta-D-glucosidic linkages in cellulose, lichenin and cereal beta-D-glucans.. The polypeptide is Endoglucanase 6 (Arabidopsis thaliana (Mouse-ear cress)).